The sequence spans 290 residues: RxLR effector protein Avr4 (290 aa).

The signal sequence occupies residues 1-24 (MRSLHILLVITASLLASLAVSAEA). The interval 33 to 56 (VVENNKDKSRFLRDGGTTEAQTDE) is disordered. Residues 36-45 (NNKDKSRFLR) show a composition bias toward basic and acidic residues. The RxLR-dEER signature appears at 42–58 (RFLRDGGTTEAQTDEER). The segment at 118–141 (KYERMQWQKLNEGQTLTYMRVGDR) is W1 motif. Positions 151-174 (QLLRWVAQKKTVKSVYDDLQIEGF) are W2 motif. The tract at residues 224-247 (VFEKWAMEGTHIKSVIKTLNLNNK) is W3 motif. N-linked (GlcNAc...) asparagine glycosylation occurs at Asn246. Residues 249-270 (ASEMANNENFPALLKYVKLYLD) form a y motif region.

It belongs to the RxLR effector family.

It is found in the secreted. Its subcellular location is the host cytoplasm. The protein resides in the host nucleus. The protein localises to the host nucleolus. It localises to the host cytoskeleton. Functionally, secreted effector that acts as an elicitor of hypersensitive response (HR) specifically on plants carrying defense protein R4, through its interaction with this protein. The chain is RxLR effector protein Avr4 from Phytophthora mirabilis.